The chain runs to 364 residues: Fructose-bisphosphate aldolase B (364 aa).

Positions 56 and 147 each coordinate substrate. The Proton acceptor role is filled by E188. K230 serves as the catalytic Schiff-base intermediate with dihydroxyacetone-P.

It belongs to the class I fructose-bisphosphate aldolase family. In terms of assembly, homotetramer.

Its subcellular location is the cytoplasm. The protein resides in the cytoskeleton. It localises to the microtubule organizing center. The protein localises to the centrosome. It is found in the centriolar satellite. It catalyses the reaction beta-D-fructose 1,6-bisphosphate = D-glyceraldehyde 3-phosphate + dihydroxyacetone phosphate. It functions in the pathway carbohydrate degradation; glycolysis; D-glyceraldehyde 3-phosphate and glycerone phosphate from D-glucose: step 4/4. The polypeptide is Fructose-bisphosphate aldolase B (ALDOB) (Gallus gallus (Chicken)).